The primary structure comprises 529 residues: Polygalacturonase (529 aa).

A signal peptide spans 1–21 (MNHRYTLLALAAAALSAGAHA). D305 functions as the Proton donor in the catalytic mechanism. H331 is an active-site residue. Residues 516–529 (AFVPLKSVAPTSPI) form a required for PGA export across the outer membrane and catalytic activity region.

Belongs to the glycosyl hydrolase 28 family. In terms of assembly, monomer.

The protein resides in the secreted. It catalyses the reaction (1,4-alpha-D-galacturonosyl)n+m + H2O = (1,4-alpha-D-galacturonosyl)n + (1,4-alpha-D-galacturonosyl)m.. Functionally, contributes to the wilt disease production on tomato. This chain is Polygalacturonase (pglA), found in Ralstonia solanacearum (Pseudomonas solanacearum).